We begin with the raw amino-acid sequence, 492 residues long: Ribose import ATP-binding protein RbsA (492 aa).

2 consecutive ABC transporter domains span residues 3-239 (IEMK…VGRS) and 249-492 (AEIR…TGGK). An ATP-binding site is contributed by 35 to 42 (GENGAGKS).

It belongs to the ABC transporter superfamily. Ribose importer (TC 3.A.1.2.1) family. As to quaternary structure, the complex is composed of an ATP-binding protein (RbsA), two transmembrane proteins (RbsC) and a solute-binding protein (RbsB).

It localises to the cell membrane. It carries out the reaction D-ribose(out) + ATP + H2O = D-ribose(in) + ADP + phosphate + H(+). Its function is as follows. Part of the ABC transporter complex RbsABC involved in ribose import. Responsible for energy coupling to the transport system. This chain is Ribose import ATP-binding protein RbsA, found in Lactococcus lactis subsp. cremoris (strain SK11).